Reading from the N-terminus, the 330-residue chain is MEARCDFCGTEKALIYCKSDSAKLCLNCDVNVHSANPLSQRHTRSLLCEKCSLQPTAVHCMNENVSLCQGCQWTASNCTGLGHRLQSLNPYSDCPSPSDFGKIWSSTLEPSVTSLVSPFSDTLLQELDDWNGSSTSVVTQTQNLKDYSSFFPMESNLPKVIEEECSGLDLCEGINLDDAPLNFNASNDIIGCSSLDNTKCYEYEDSFKEENNIGLPSLLLPTLSGNVVPNMSLSMSNLTGESNATDYQDCGISPGFLIGDSPWESNVEVSFNPKLRDEAKKRYKQKKSKRMFGKQIRYASRKARADTRKRVKGRFVKSGETFEYDPSLVM.

Positions 5, 8, 28, and 33 each coordinate Zn(2+). The segment at 5 to 47 (CDFCGTEKALIYCKSDSAKLCLNCDVNVHSANPLSQRHTRSLL) adopts a B box-type 1; atypical zinc-finger fold. The B box-type 2; degenerate zinc-finger motif lies at 48 to 88 (CEKCSLQPTAVHCMNENVSLCQGCQWTASNCTGLGHRLQSL). The 43-residue stretch at 276-318 (RDEAKKRYKQKKSKRMFGKQIRYASRKARADTRKRVKGRFVKS) folds into the CCT domain.

This sequence belongs to the CONSTANS family.

It is found in the nucleus. In Arabidopsis thaliana (Mouse-ear cress), this protein is Putative zinc finger protein CONSTANS-LIKE 11 (COL11).